The chain runs to 230 residues: Flagellar L-ring protein (230 aa).

Residues 1–15 (MSRLPSLSRLCLAIA) form the signal peptide. The N-palmitoyl cysteine moiety is linked to residue Cys-16. A lipid anchor (S-diacylglycerol cysteine) is attached at Cys-16.

It belongs to the FlgH family. The basal body constitutes a major portion of the flagellar organelle and consists of four rings (L,P,S, and M) mounted on a central rod.

Its subcellular location is the cell outer membrane. The protein resides in the bacterial flagellum basal body. In terms of biological role, assembles around the rod to form the L-ring and probably protects the motor/basal body from shearing forces during rotation. This chain is Flagellar L-ring protein, found in Xanthomonas euvesicatoria pv. vesicatoria (strain 85-10) (Xanthomonas campestris pv. vesicatoria).